The chain runs to 105 residues: ATP-dependent Clp protease adapter protein ClpS (105 aa).

Belongs to the ClpS family. In terms of assembly, binds to the N-terminal domain of the chaperone ClpA.

Involved in the modulation of the specificity of the ClpAP-mediated ATP-dependent protein degradation. This is ATP-dependent Clp protease adapter protein ClpS from Prochlorococcus marinus (strain MIT 9515).